A 422-amino-acid chain; its full sequence is Phytoene synthase, chloroplastic (422 aa).

The N-terminal 83 residues, 1-83, are a transit peptide targeting the chloroplast; the sequence is MSLASSLVVS…GSVIVASMVA (83 aa).

It belongs to the phytoene/squalene synthase family. Monomer.

It is found in the plastid. The protein localises to the chloroplast. The catalysed reaction is 2 (2E,6E,10E)-geranylgeranyl diphosphate = 15-cis-phytoene + 2 diphosphate. Its pathway is carotenoid biosynthesis; phytoene biosynthesis; all-trans-phytoene from geranylgeranyl diphosphate: step 1/1. Functionally, catalyzes the reaction from prephytoene diphosphate to phytoene. The polypeptide is Phytoene synthase, chloroplastic (PSY) (Cucumis melo (Muskmelon)).